The chain runs to 225 residues: Thymidine kinase (225 aa).

8 to 15 (GPMFSGKT) is a binding site for ATP. The active-site Proton acceptor is glutamate 92. Tyrosine 122 is a binding site for substrate. 2 residues coordinate Zn(2+): cysteine 147 and cysteine 150. A substrate-binding site is contributed by 167–171 (KILVG). Cysteine 180 and cysteine 183 together coordinate Zn(2+). Positions 197-207 (SEQINNQTELS) are enriched in polar residues. The tract at residues 197–225 (SEQINNQTELSEPTRQKESLKIKKRRIDS) is disordered. The segment covering 208 to 225 (EPTRQKESLKIKKRRIDS) has biased composition (basic and acidic residues).

Belongs to the thymidine kinase family.

It catalyses the reaction thymidine + ATP = dTMP + ADP + H(+). The protein is Thymidine kinase (TK) of Acanthamoeba polyphaga mimivirus (APMV).